The following is a 499-amino-acid chain: E3 ubiquitin-protein ligase TRIM69 (499 aa).

Positions M1–Q152 are necessary for nuclear localization. The segment at C41–K82 adopts an RING-type zinc-finger fold. Residues F160–N265 adopt a coiled-coil conformation. One can recognise a B30.2/SPRY domain in the interval P305 to Q499. Residue S341 is modified to Phosphoserine.

This sequence belongs to the TRIM/RBCC family. In terms of assembly, homo-multimer; required for antiviral activity. Interacts with PML. Post-translationally, phosphorylated. Phosphorylation is necessary for nuclear localization.

It localises to the cytoplasm. It is found in the nucleus. Its subcellular location is the nucleus speckle. The protein resides in the cytoskeleton. The protein localises to the microtubule organizing center. It localises to the centrosome. The catalysed reaction is S-ubiquitinyl-[E2 ubiquitin-conjugating enzyme]-L-cysteine + [acceptor protein]-L-lysine = [E2 ubiquitin-conjugating enzyme]-L-cysteine + N(6)-ubiquitinyl-[acceptor protein]-L-lysine.. It participates in protein modification; protein ubiquitination. Functionally, E3 ubiquitin ligase that plays an important role in antiviral immunity by restricting different viral infections including dengue virus or vesicular stomatitis indiana virus. Ubiquitinates viral proteins such as dengue virus NS3 thereby limiting infection. In addition, acts as a key mediator of type I interferon induced microtubule stabilization by directly associating to microtubules independently of its E3 ligase activity. Also plays a role in cataract formation together with TP53. Mechanistically, inhibits UVB-induced cell apoptosis and reactive oxygen species (ROS) production by inducing TP53 ubiquitination. Regulates centrosome dynamics and mitotic progression by ubiquitinating STK3/MST2; leading to its redistribution to the perinuclear cytoskeleton and subsequent phosphorylation by PLK1. The sequence is that of E3 ubiquitin-protein ligase TRIM69 (Trim69) from Rattus norvegicus (Rat).